The sequence spans 224 residues: UPF0758 protein PSPA7_6095 (224 aa).

The MPN domain occupies 102–224 (VLESPQAVRD…PLSLAEYGWM (123 aa)). 3 residues coordinate Zn(2+): histidine 173, histidine 175, and aspartate 186. The JAMM motif signature appears at 173 to 186 (HNHPSGDARPSLAD).

The protein belongs to the UPF0758 family.

This chain is UPF0758 protein PSPA7_6095, found in Pseudomonas paraeruginosa (strain DSM 24068 / PA7) (Pseudomonas aeruginosa (strain PA7)).